Here is a 310-residue protein sequence, read N- to C-terminus: tRNA dimethylallyltransferase (310 aa).

10-17 (GPTAVGKS) is an ATP binding site. Position 12-17 (12-17 (TAVGKS)) interacts with substrate. Residues 35–38 (DSMQ) are interaction with substrate tRNA.

The protein belongs to the IPP transferase family. Monomer. It depends on Mg(2+) as a cofactor.

The enzyme catalyses adenosine(37) in tRNA + dimethylallyl diphosphate = N(6)-dimethylallyladenosine(37) in tRNA + diphosphate. Catalyzes the transfer of a dimethylallyl group onto the adenine at position 37 in tRNAs that read codons beginning with uridine, leading to the formation of N6-(dimethylallyl)adenosine (i(6)A). This is tRNA dimethylallyltransferase from Clostridium perfringens (strain 13 / Type A).